Consider the following 82-residue polypeptide: UPF0291 protein LJ_1507 (82 aa).

The segment at 61-82 is disordered; sequence DGKEVTSEKAKEAQRRKGLRKD.

This sequence belongs to the UPF0291 family.

It is found in the cytoplasm. This chain is UPF0291 protein LJ_1507, found in Lactobacillus johnsonii (strain CNCM I-12250 / La1 / NCC 533).